The sequence spans 456 residues: uncharacterized protein (456 aa).

The TRAM domain occupies 3–61; sequence TIKKNEVKTGKVIDLTHEGHGVVKVDRYPIFIPNALIDEEIKFKLIKVKKNFAIGKLIE. [4Fe-4S] cluster-binding residues include cysteine 74, cysteine 80, cysteine 83, and cysteine 162. Positions 286, 315, 336, and 384 each coordinate S-adenosyl-L-methionine. Cysteine 411 functions as the Nucleophile in the catalytic mechanism.

Belongs to the class I-like SAM-binding methyltransferase superfamily. RNA M5U methyltransferase family.

This is an uncharacterized protein from Staphylococcus epidermidis (strain ATCC 12228 / FDA PCI 1200).